Reading from the N-terminus, the 331-residue chain is GTPase Obg (331 aa).

Positions 1-159 (MHFIDEVKIY…MWIHLRLKLL (159 aa)) constitute an Obg domain. The region spanning 160-327 (SDVGLIGLPN…IVKLALEIIK (168 aa)) is the OBG-type G domain. GTP-binding positions include 166–173 (GLPNAGKS), 191–195 (FTTLV), 212–215 (DIPG), 279–282 (NKCD), and 308–310 (STY). Mg(2+) contacts are provided by Ser-173 and Thr-193.

The protein belongs to the TRAFAC class OBG-HflX-like GTPase superfamily. OBG GTPase family. As to quaternary structure, monomer. It depends on Mg(2+) as a cofactor.

Its subcellular location is the cytoplasm. Functionally, an essential GTPase which binds GTP, GDP and possibly (p)ppGpp with moderate affinity, with high nucleotide exchange rates and a fairly low GTP hydrolysis rate. Plays a role in control of the cell cycle, stress response, ribosome biogenesis and in those bacteria that undergo differentiation, in morphogenesis control. This is GTPase Obg from Rickettsia prowazekii (strain Madrid E).